Reading from the N-terminus, the 618-residue chain is Proline--tRNA ligase (618 aa).

This sequence belongs to the class-II aminoacyl-tRNA synthetase family. ProS type 1 subfamily. Homodimer.

It is found in the cytoplasm. The enzyme catalyses tRNA(Pro) + L-proline + ATP = L-prolyl-tRNA(Pro) + AMP + diphosphate. Functionally, catalyzes the attachment of proline to tRNA(Pro) in a two-step reaction: proline is first activated by ATP to form Pro-AMP and then transferred to the acceptor end of tRNA(Pro). As ProRS can inadvertently accommodate and process non-cognate amino acids such as alanine and cysteine, to avoid such errors it has two additional distinct editing activities against alanine. One activity is designated as 'pretransfer' editing and involves the tRNA(Pro)-independent hydrolysis of activated Ala-AMP. The other activity is designated 'posttransfer' editing and involves deacylation of mischarged Ala-tRNA(Pro). The misacylated Cys-tRNA(Pro) is not edited by ProRS. The sequence is that of Proline--tRNA ligase from Streptococcus pyogenes serotype M4 (strain MGAS10750).